Consider the following 206-residue polypeptide: 3-isopropylmalate dehydratase small subunit (206 aa).

The protein belongs to the LeuD family. LeuD type 1 subfamily. Heterodimer of LeuC and LeuD.

The catalysed reaction is (2R,3S)-3-isopropylmalate = (2S)-2-isopropylmalate. The protein operates within amino-acid biosynthesis; L-leucine biosynthesis; L-leucine from 3-methyl-2-oxobutanoate: step 2/4. Its function is as follows. Catalyzes the isomerization between 2-isopropylmalate and 3-isopropylmalate, via the formation of 2-isopropylmaleate. The sequence is that of 3-isopropylmalate dehydratase small subunit from Leptospira interrogans serogroup Icterohaemorrhagiae serovar copenhageni (strain Fiocruz L1-130).